Consider the following 468-residue polypeptide: Trehalose-2-sulfate acyltransferase PapA2 (468 aa).

Belongs to the PapA acyltransferase family.

The enzyme catalyses 2-O-sulfo-alpha,alpha-trehalose + hexadecanoyl-CoA = 2-O-sulfo-2'-O-hexadecanoyl-alpha,alpha-trehalose + CoA. In terms of biological role, catalyzes the acylation of trehalose-2-sulfate by adding the palmitoyl group at the 2'-position to yield the intermediate trehalose-2-sulfate-2'-palmitate (SL659). The chain is Trehalose-2-sulfate acyltransferase PapA2 (papA2) from Mycobacterium tuberculosis (strain ATCC 25177 / H37Ra).